The sequence spans 514 residues: 2,3-bisphosphoglycerate-independent phosphoglycerate mutase (514 aa).

The Mn(2+) site is built by Asp-14 and Ser-64. Ser-64 serves as the catalytic Phosphoserine intermediate. Residues His-125, 155–156 (RD), Arg-187, Arg-193, 263–266 (RADR), and Lys-336 each bind substrate. Residues Asp-403, His-407, Asp-444, His-445, and His-463 each coordinate Mn(2+).

The protein belongs to the BPG-independent phosphoglycerate mutase family. In terms of assembly, monomer. It depends on Mn(2+) as a cofactor.

It catalyses the reaction (2R)-2-phosphoglycerate = (2R)-3-phosphoglycerate. The protein operates within carbohydrate degradation; glycolysis; pyruvate from D-glyceraldehyde 3-phosphate: step 3/5. In terms of biological role, catalyzes the interconversion of 2-phosphoglycerate and 3-phosphoglycerate. The protein is 2,3-bisphosphoglycerate-independent phosphoglycerate mutase of Salmonella typhi.